The primary structure comprises 317 residues: Aspartate carbamoyltransferase catalytic subunit (317 aa).

Positions 66 and 67 each coordinate carbamoyl phosphate. K94 serves as a coordination point for L-aspartate. Residues R116, H144, and Q147 each coordinate carbamoyl phosphate. Positions 177 and 231 each coordinate L-aspartate. Residues G272 and P273 each coordinate carbamoyl phosphate.

This sequence belongs to the aspartate/ornithine carbamoyltransferase superfamily. ATCase family. In terms of assembly, heterododecamer (2C3:3R2) of six catalytic PyrB chains organized as two trimers (C3), and six regulatory PyrI chains organized as three dimers (R2).

The catalysed reaction is carbamoyl phosphate + L-aspartate = N-carbamoyl-L-aspartate + phosphate + H(+). It participates in pyrimidine metabolism; UMP biosynthesis via de novo pathway; (S)-dihydroorotate from bicarbonate: step 2/3. Its function is as follows. Catalyzes the condensation of carbamoyl phosphate and aspartate to form carbamoyl aspartate and inorganic phosphate, the committed step in the de novo pyrimidine nucleotide biosynthesis pathway. This chain is Aspartate carbamoyltransferase catalytic subunit, found in Rhodopseudomonas palustris (strain BisB18).